We begin with the raw amino-acid sequence, 727 residues long: ADP-ribosylation factor-binding protein GGA3 (727 aa).

One can recognise a VHS domain in the interval 16 to 146 (ATNPSNRQED…MLKRQGIVQS (131 aa)). Phosphoserine occurs at positions 159 and 275. A GAT domain is found at 171–298 (DEEKSKLLAK…VINSYKTIIE (128 aa)). The interval 299-597 (GQIINGEVTT…VHVPLESIKP (299 aa)) is unstructured hinge. The tract at residues 334-385 (TPSSSSPVLAPAPAPPTSGIPILPPPPQTSGPPRSRSSSQAEAPSGPDSTNN) is disordered. The segment covering 343-363 (APAPAPPTSGIPILPPPPQTS) has biased composition (pro residues). Residues 364–374 (GPPRSRSSSQA) show a composition bias toward low complexity. The DXXLL motif lies at 391 to 395 (DEELL). The tract at residues 400-419 (SDPAPTAPKESAGNSPWHLF) is disordered. The GAE domain occupies 598 to 719 (SSALPVTAYD…TELGEVDQFP (122 aa)).

It belongs to the GGA protein family. In terms of assembly, monomer. Interacts with GGA1 and GGA2. Binds to clathrin and activated ARFs, such as ARF1, ARF5 and ARF6. Binds RABEP1 and RABGEF1. Interacts with the membrane proteins M6PR/CD-MPR and IGF2R/CI-MPR and the accessory proteins SYNRG, EPN4, NECAP1, NECAP2 and AFTPH/aftiphilin. Interacts with TSG101 and UBC. Interacts with ADRA2B. Interacts with NTRK1; the interaction is independent of NTRK1 activation and ubiquitination. Interacts (via VHS domain) with BACE1 (via DXXLL motif). Post-translationally, phosphorylated by CK2 and dephosphorylated by PP2A. Phosphorylation of GGA3 allows the internal DXXLL motif to bind the VHS domain and to inhibit the recognition of cargo signals. Ubiquitinated. In terms of processing, proteolytically cleaved during apoptosis by CASP3.

Its subcellular location is the golgi apparatus. The protein resides in the trans-Golgi network membrane. It is found in the endosome membrane. It localises to the early endosome membrane. The protein localises to the recycling endosome membrane. In terms of biological role, plays a role in protein sorting and trafficking between the trans-Golgi network (TGN) and endosomes. Mediates the ARF-dependent recruitment of clathrin to the TGN and binds ubiquitinated proteins and membrane cargo molecules with a cytosolic acidic cluster-dileucine (DXXLL) motif. Mediates export of the GPCR receptor ADRA2B to the cell surface. Involved in BACE1 transport and sorting as well as regulation of BACE1 protein levels. Regulates retrograde transport of BACE1 from endosomes to the trans-Golgi network via interaction through the VHS motif and dependent of BACE1 phosphorylation. Modulates BACE1 protein levels independently of the interaction between VHS domain and DXXLL motif through recognition of ubiquitination. Key player in a novel DXXLL-mediated endosomal sorting machinery to the recycling pathway that targets NTRK1 to the plasma membrane. The polypeptide is ADP-ribosylation factor-binding protein GGA3 (Rattus norvegicus (Rat)).